The chain runs to 114 residues: Superoxide dismutase [Cu-Zn] (114 aa).

Cu cation is bound by residues His37, His39, and His54. Zn(2+) is bound by residues His54, His62, His71, and Asp74. Residues 54-80 are disordered; sequence HFNPGNKEHGAPTDGNRHLGDLGNIQA. Over residues 59–73 the composition is skewed to basic and acidic residues; it reads NKEHGAPTDGNRHLG. His111 lines the Cu cation pocket.

The protein belongs to the Cu-Zn superoxide dismutase family. Homodimer. The cofactor is Cu cation. It depends on Zn(2+) as a cofactor.

The protein localises to the cytoplasm. It carries out the reaction 2 superoxide + 2 H(+) = H2O2 + O2. Destroys radicals which are normally produced within the cells and which are toxic to biological systems. The chain is Superoxide dismutase [Cu-Zn] from Drosophila tolteca (Fruit fly).